A 1446-amino-acid polypeptide reads, in one-letter code: DNA polymerase III PolC-type (1446 aa).

The 157-residue stretch at 425–581 folds into the Exonuclease domain; that stretch reads YVIFDVETTG…ADAESTGYLL (157 aa).

The protein belongs to the DNA polymerase type-C family. PolC subfamily.

Its subcellular location is the cytoplasm. The catalysed reaction is DNA(n) + a 2'-deoxyribonucleoside 5'-triphosphate = DNA(n+1) + diphosphate. In terms of biological role, required for replicative DNA synthesis. This DNA polymerase also exhibits 3' to 5' exonuclease activity. The chain is DNA polymerase III PolC-type from Latilactobacillus sakei subsp. sakei (strain 23K) (Lactobacillus sakei subsp. sakei).